We begin with the raw amino-acid sequence, 77 residues long: Sec-independent protein translocase protein TatA (77 aa).

A helical membrane pass occupies residues Met-1–Gly-21. The disordered stretch occupies residues Lys-40 to Gln-77. Positions Lys-58–Gln-77 are enriched in basic and acidic residues.

Belongs to the TatA/E family. In terms of assembly, the Tat system comprises two distinct complexes: a TatABC complex, containing multiple copies of TatA, TatB and TatC subunits, and a separate TatA complex, containing only TatA subunits. Substrates initially bind to the TatABC complex, which probably triggers association of the separate TatA complex to form the active translocon.

It is found in the cell inner membrane. Part of the twin-arginine translocation (Tat) system that transports large folded proteins containing a characteristic twin-arginine motif in their signal peptide across membranes. TatA could form the protein-conducting channel of the Tat system. In Cupriavidus metallidurans (strain ATCC 43123 / DSM 2839 / NBRC 102507 / CH34) (Ralstonia metallidurans), this protein is Sec-independent protein translocase protein TatA.